The chain runs to 367 residues: Protein RIC-3 (367 aa).

The signal sequence occupies residues 1–31; sequence MAYSTVQRVALASGLVLAVSLLLPKAFLSRG. The segment at 30–67 is disordered; sequence RGKRPEPPPGPEGKLDRFPPMMHHHSAPSDGQTPGARF. Residues 32–95 are Lumenal-facing; it reads KRPEPPPGPE…AGGGGSGRGL (64 aa). A helical membrane pass occupies residues 96-116; it reads MGQIIPIYGFGIFLYILYILF. The Cytoplasmic segment spans residues 117–367; that stretch reads KLSKGKTAED…LRKRNPQGFE (251 aa). The stretch at 138 to 169 forms a coiled coil; the sequence is HRKITNFELVQLQEKLKETEEAMEKLINRVGP. An N6-acetyllysine; alternate modification is found at Lys201. Lys201 participates in a covalent cross-link: Glycyl lysine isopeptide (Lys-Gly) (interchain with G-Cter in ubiquitin); alternate. Disordered stretches follow at residues 262–301 and 322–367; these read QMGE…PESC and ADGY…QGFE. Basic and acidic residues predominate over residues 271–280; that stretch reads SERLSWDHLP. Residues 358–367 show a composition bias toward basic residues; sequence LRKRNPQGFE.

It belongs to the ric-3 family. As to quaternary structure, monomer and homodimer. Interacts with CHRNA7, CHRNA3, CHRNA4, CHRNB2, CHRNB4 and HTR3A. As to expression, expressed in brain, with highest levels in hippocampus, cerebellum and superior colliculus.

Its subcellular location is the endoplasmic reticulum membrane. Molecular chaperone which promotes the proper subunit assembly and surface trafficking of alpha-7 (CHRNA7) nicotinic acetylcholine receptor. Promotes the proper subunit assembly and cell surface expression of alpha-8 (CHRNA8) nicotinic acetylcholine receptor. May also promote functional expression of homomeric serotoninergic 5-HT3 receptors, and of heteromeric acetylcholine receptors alpha-3/beta-2, alpha-3/beta-4, alpha-4/beta-2 and alpha-4/beta-4. This chain is Protein RIC-3 (Ric3), found in Mus musculus (Mouse).